Here is a 102-residue protein sequence, read N- to C-terminus: MNKIRKGDEVIVVTGKDKGKRGVVLAVGAEHVTVEGINLVKKHVKPNPMKGTTGGVEAKTMPLHISNVALVDANGKASRVGIKVEEGKKVRFLKTTGAVLSA.

This sequence belongs to the universal ribosomal protein uL24 family. As to quaternary structure, part of the 50S ribosomal subunit.

Functionally, one of two assembly initiator proteins, it binds directly to the 5'-end of the 23S rRNA, where it nucleates assembly of the 50S subunit. In terms of biological role, one of the proteins that surrounds the polypeptide exit tunnel on the outside of the subunit. This chain is Large ribosomal subunit protein uL24, found in Burkholderia ambifaria (strain ATCC BAA-244 / DSM 16087 / CCUG 44356 / LMG 19182 / AMMD) (Burkholderia cepacia (strain AMMD)).